The following is a 143-amino-acid chain: Putative pre-16S rRNA nuclease (143 aa).

Belongs to the YqgF nuclease family.

The protein resides in the cytoplasm. In terms of biological role, could be a nuclease involved in processing of the 5'-end of pre-16S rRNA. The protein is Putative pre-16S rRNA nuclease of Mesomycoplasma hyopneumoniae (strain 232) (Mycoplasma hyopneumoniae).